The primary structure comprises 416 residues: Squamosa promoter-binding-like protein 8 (416 aa).

Residues 11-53 form a disordered region; the sequence is SSCDDFGYNATPPPPPSLLPIMDQDGGGGSIQRDHHHHHNHQQ. Residues 182–260 form an SBP-type zinc finger; that stretch reads PPRCQAEGCK…ADHNRRRRKS (79 aa). Cys185, Cys190, Cys207, His210, Cys227, Cys230, His234, and Cys246 together coordinate Zn(2+). Positions 243–259 match the Bipartite nuclear localization signal motif; it reads KKSCRKRLADHNRRRRK. Residues 250–299 are disordered; sequence LADHNRRRRKSKPSDGEHSGEKRRAQANKSAATKDKAGSSSKNAGIGDGF. Basic and acidic residues predominate over residues 261 to 273; it reads KPSDGEHSGEKRR.

As to expression, expressed in stems, leaf sheaths, and young panicles.

Its subcellular location is the nucleus. Probable transcription factor that plays an important role in building the laminar joint between leaf blade and leaf sheath boundary, thereby controlling ligule and auricle development. This is Squamosa promoter-binding-like protein 8 (SPL8) from Oryza sativa subsp. indica (Rice).